The sequence spans 461 residues: V-type ATP synthase beta chain (461 aa).

The protein belongs to the ATPase alpha/beta chains family.

In terms of biological role, produces ATP from ADP in the presence of a proton gradient across the membrane. The V-type beta chain is a regulatory subunit. In Clostridium botulinum (strain ATCC 19397 / Type A), this protein is V-type ATP synthase beta chain.